The sequence spans 885 residues: Probable alpha-glucosidase Os06g0675700 (885 aa).

A signal peptide spans 1–33 (MMGSPPAPPARRLGALAVFLLALFLAAPWGVDC). Residues Asn195, Asn378, and Asn397 are each glycosylated (N-linked (GlcNAc...) asparagine). Active-site residues include Asp443 and Glu446. Residues Asn467 and Asn477 are each glycosylated (N-linked (GlcNAc...) asparagine). Asp540 functions as the Proton donor in the catalytic mechanism. Asn576 and Asn844 each carry an N-linked (GlcNAc...) asparagine glycan.

Belongs to the glycosyl hydrolase 31 family.

The enzyme catalyses Hydrolysis of terminal, non-reducing (1-&gt;4)-linked alpha-D-glucose residues with release of alpha-D-glucose.. In Oryza sativa subsp. japonica (Rice), this protein is Probable alpha-glucosidase Os06g0675700.